A 321-amino-acid polypeptide reads, in one-letter code: L-carnitine dehydrogenase (321 aa).

Gly-14–Gly-19 is a binding site for NAD(+). Residues Met-317 to Glu-321 form an important for catalytic activity region.

This sequence belongs to the 3-hydroxyacyl-CoA dehydrogenase family. L-carnitine dehydrogenase subfamily. As to quaternary structure, homodimer.

The protein localises to the cytoplasm. It carries out the reaction carnitine + NAD(+) = 3-dehydrocarnitine + NADH + H(+). The protein operates within amine and polyamine metabolism; carnitine metabolism. With respect to regulation, the enzyme activity is strongly inhibited by Ag(+), Ni(+), Hg(+), and p-chloromercuribenzoate, and partially inhibited by Li(+), Ca(2+), Mn(2+), Co(2+), Cu(2+), and Zn(2+). In terms of biological role, catalyzes the NAD(+)-dependent oxidation of L-carnitine to 3-dehydrocarnitine. Is specific for L-carnitine and NAD(+) as substrates since D-carnitine, other carnitine analogs such as choline and betaine, and NADP(+) are not substrates. Despite a high similarity to 3-hydroxyacyl-CoA dehydrogenases, cannot dehydrogenate 3-hydroxybutylate and 3-hydroxybutyl-CoA. Is probably involved in a L-carnitine degradation pathway that allows Pseudomonas sp. strain NBRC 13558 to grow on L-carnitine as the sole source of carbon and nitrogen. This is L-carnitine dehydrogenase from Pseudomonas sp.